The sequence spans 647 residues: MGKIRKLDDQLSNLIAAGEVVERPASVVKELVENSIDANSTSIEIHLEEAGLSKIRIIDNGDGIAEEDCIVAFERHATSKIKDENDLFRIRTLGFRGEALPSIASVSELELITSTGDAPGTHLIIKGGDIIKQEKTASRKGTDITVQNLFFNTPARLKYMKTIHTELGNITDIVYRIAMSHPEVSLKLFHNEKKLLHTSGNGDVRQVLASIYSIQVAKKLVPIEAESLDFTIKGYVTLPEVTRASRNYMSTIVNGRYVRNFVLMKAIQQGYHTLLPVGRYPIGFLSIEMDPMLVDVNVHPAKLEVRFSKEQELLKLIEETLQAAFKKIQLIPDAGVTTKKKEKDESVQEQFQFEHAKPKEPSMPEIVLPTGMDEKQEEPQAVKQSAQLWQPPKQEWQPPQSLVREEQSWQPSTKSIIEEPIREEKSWNSNDEDFELEELEEEVQEIEEIEMNGNDLPPLYPIGQMHGTYIFAQNDKGLYMIDQHAAQERINYEYFRDKVGRVAQEVQELLVPYRIDLSLTEFLRVEEQLEELKKVGLFLEQFGHQSFIVRSHPTWFPKGQETEIIDEMMEQVVKLKKVDIKKLREEAAIMMSCKASIKANQYLTNDQIFALLEELRTTTNPYTCPHGRPILVHHSTYELEKMFKRVM.

The segment at 377–396 (EEPQAVKQSAQLWQPPKQEW) is disordered. The span at 387–396 (QLWQPPKQEW) shows a compositional bias: low complexity.

Belongs to the DNA mismatch repair MutL/HexB family.

This protein is involved in the repair of mismatches in DNA. It is required for dam-dependent methyl-directed DNA mismatch repair. May act as a 'molecular matchmaker', a protein that promotes the formation of a stable complex between two or more DNA-binding proteins in an ATP-dependent manner without itself being part of a final effector complex. This is DNA mismatch repair protein MutL from Bacillus cereus (strain AH187).